Consider the following 209-residue polypeptide: Ribosomal RNA large subunit methyltransferase E (209 aa).

S-adenosyl-L-methionine is bound by residues G63, W65, D83, D99, and D124. Residue K164 is the Proton acceptor of the active site.

The protein belongs to the class I-like SAM-binding methyltransferase superfamily. RNA methyltransferase RlmE family.

It is found in the cytoplasm. The enzyme catalyses uridine(2552) in 23S rRNA + S-adenosyl-L-methionine = 2'-O-methyluridine(2552) in 23S rRNA + S-adenosyl-L-homocysteine + H(+). Its function is as follows. Specifically methylates the uridine in position 2552 of 23S rRNA at the 2'-O position of the ribose in the fully assembled 50S ribosomal subunit. This Photorhabdus laumondii subsp. laumondii (strain DSM 15139 / CIP 105565 / TT01) (Photorhabdus luminescens subsp. laumondii) protein is Ribosomal RNA large subunit methyltransferase E.